The sequence spans 205 residues: Outer-membrane lipoprotein carrier protein (205 aa).

Residues 1-22 (MKKIVIVISILLTSFLSSAVSA) form the signal peptide.

It belongs to the LolA family. Monomer.

The protein localises to the periplasm. Participates in the translocation of lipoproteins from the inner membrane to the outer membrane. Only forms a complex with a lipoprotein if the residue after the N-terminal Cys is not an aspartate (The Asp acts as a targeting signal to indicate that the lipoprotein should stay in the inner membrane). The protein is Outer-membrane lipoprotein carrier protein of Psychromonas ingrahamii (strain DSM 17664 / CCUG 51855 / 37).